We begin with the raw amino-acid sequence, 749 residues long: Chaperone protein dnaK3 (749 aa).

Position 198 is a phosphothreonine; by autocatalysis (T198). 3 stretches are compositionally biased toward basic and acidic residues: residues 643–653 (RWDADPWDRSR), 661–694 (YDDR…RDRN), and 711–724 (PTWE…RDRS). The tract at residues 643–749 (RWDADPWDRS…GWDDDDDEWF (107 aa)) is disordered. The segment covering 740-749 (GWDDDDDEWF) has biased composition (acidic residues).

The protein belongs to the heat shock protein 70 family.

Acts as a chaperone. The chain is Chaperone protein dnaK3 (dnaK3) from Synechococcus elongatus (strain ATCC 33912 / PCC 7942 / FACHB-805) (Anacystis nidulans R2).